The chain runs to 448 residues: ATP-dependent protease ATPase subunit HslU (448 aa).

Residues Val-21, 63–68 (GVGKTE), Asp-261, Glu-326, and Arg-398 contribute to the ATP site.

The protein belongs to the ClpX chaperone family. HslU subfamily. In terms of assembly, a double ring-shaped homohexamer of HslV is capped on each side by a ring-shaped HslU homohexamer. The assembly of the HslU/HslV complex is dependent on binding of ATP.

The protein resides in the cytoplasm. Functionally, ATPase subunit of a proteasome-like degradation complex; this subunit has chaperone activity. The binding of ATP and its subsequent hydrolysis by HslU are essential for unfolding of protein substrates subsequently hydrolyzed by HslV. HslU recognizes the N-terminal part of its protein substrates and unfolds these before they are guided to HslV for hydrolysis. The protein is ATP-dependent protease ATPase subunit HslU of Persephonella marina (strain DSM 14350 / EX-H1).